A 335-amino-acid polypeptide reads, in one-letter code: Trans-1,2-dihydrobenzene-1,2-diol dehydrogenase (335 aa).

The protein belongs to the Gfo/Idh/MocA family. In terms of assembly, homodimer. As to expression, liver, lens, spleen, kidney and small intestine.

The catalysed reaction is (1R,2R)-1,2-dihydrobenzene-1,2-diol + NADP(+) = catechol + NADPH + H(+). It carries out the reaction D-xylose + NADP(+) = D-xylono-1,5-lactone + NADPH + H(+). Strongly inhibited by isoascorbic acid, 4-hydroxyacetophenone and chloromercuriphenylsulphonate. Stimulated by various salts. This chain is Trans-1,2-dihydrobenzene-1,2-diol dehydrogenase (DHDH), found in Sus scrofa (Pig).